We begin with the raw amino-acid sequence, 165 residues long: AP-3 complex subunit sigma (165 aa).

The protein belongs to the adaptor complexes small subunit family. Adaptor protein complex 3 (AP-3) is a heterotetramer composed of 2 large adaptins (apl5 and apl6), a medium adaptin (apm3) and a small adaptin (aps3).

It is found in the golgi apparatus. The protein localises to the cytoplasmic vesicle membrane. Functionally, part of the AP-3 complex, an adaptor-related complex which is not clathrin-associated. The complex is associated with the Golgi region as well as more peripheral structures. It facilitates the budding of vesicles from the Golgi membrane and may be directly involved in trafficking to the vacuole. The polypeptide is AP-3 complex subunit sigma (aps3) (Schizosaccharomyces pombe (strain 972 / ATCC 24843) (Fission yeast)).